The primary structure comprises 180 residues: Regulator of G-protein signaling 8 (180 aa).

Ser-26 carries the phosphoserine modification. The RGS domain occupies 56-171 (SFDVLLSHKY…FLRSKMYLDL (116 aa)).

Interacts with GNAO1 and GNAI3.

The protein localises to the cell membrane. Its subcellular location is the membrane. The protein resides in the perikaryon. It is found in the cell projection. It localises to the dendrite. The protein localises to the nucleus. Its function is as follows. Regulates G protein-coupled receptor signaling cascades, including signaling via muscarinic acetylcholine receptor CHRM2 and dopamine receptor DRD2. Inhibits signal transduction by increasing the GTPase activity of G protein alpha subunits, thereby driving them into their inactive GDP-bound form. Modulates the activity of potassium channels that are activated in response to DRD2 and CHRM2 signaling. The polypeptide is Regulator of G-protein signaling 8 (Rgs8) (Mus musculus (Mouse)).